Here is a 2776-residue protein sequence, read N- to C-terminus: Microtubule-associated protein 1A (2776 aa).

Phosphoserine is present on residues S114, S117, S118, S121, and S155. Y177 is modified (phosphotyrosine). Residues 310–331 (PSKIKHRADSKESLKAAPKTAM) are disordered. Residues S319 and S322 each carry the phosphoserine modification. Residues 336-338 (KRE) form repeat 1. The segment at 336-541 (KREEVLEEGA…TQDFEELKRE (206 aa)) is 11 X 3 AA approximate repeats of K-K-[DE]. The segment covering 345 to 390 (AKEARSELAKELAKSEKKAKEPSEKPPEKPSKPERVRTESSEALKA) has biased composition (basic and acidic residues). 8 disordered regions span residues 345–678 (AKEA…KAES), 738–809 (TIPG…TELT), 846–1076 (EDQS…AGGQ), 1094–1210 (ETGE…ESLG), 1223–1651 (EKGP…SPEQ), 1685–1729 (DGQG…FKDF), 1744–1848 (LAES…APFS), and 1866–2648 (AELE…NGLK). S384 is subject to Phosphoserine. Residues 391–406 (EKRKLIKDKVGKKHLK) are compositionally biased toward basic residues. Composition is skewed to basic and acidic residues over residues 407–464 (EKIS…KPDL) and 484–500 (LKVD…ELSS). 9 consecutive repeat copies span residues 415 to 417 (KRD), 420 to 422 (KKE), 424 to 426 (KKE), 427 to 429 (RKE), 431 to 433 (KKE), 436 to 438 (RKE), 440 to 442 (KKD), 444 to 446 (KKD), and 449 to 451 (RKD). At T504 the chain carries Phosphothreonine. 2 positions are modified to phosphoserine: S526 and S527. Residues 536–556 (EELKREERGLLAEPRDTELGE) show a composition bias toward basic and acidic residues. Repeat unit 11 spans residues 539-541 (KRE). Polar residues predominate over residues 567–579 (GRPSTAIQVTQPP). Positions 587-631 (QVEREKEVVPDFPEDKGSKNRAPDSGAEVEREKETWEERKPREAE) are enriched in basic and acidic residues. S604 and S611 each carry phosphoserine. Phosphothreonine is present on T633. A compositionally biased stretch (basic and acidic residues) spans 640–667 (AREESEPEVKEDVIEKAELEEMEEVHPS). S644, S667, S678, and S786 each carry phosphoserine. Polar residues-rich tracts occupy residues 785-800 (ASQS…SSKT), 846-859 (EDQS…PQTE), and 870-882 (TVTS…TEAT). S873, S876, S877, and S890 each carry phosphoserine. A Phosphothreonine modification is found at T893. Phosphoserine occurs at positions 895, 899, and 908. The span at 944 to 954 (VTTSEKLSSQY) shows a compositional bias: polar residues. Phosphoserine occurs at positions 981, 991, 999, 1008, 1014, 1023, and 1062. Phosphothreonine is present on T1068. Positions 1096 to 1105 (GEAGAASGAG) are enriched in low complexity. The span at 1112–1124 (RTQEPAEPQKDEL) shows a compositional bias: basic and acidic residues. S1131, S1133, S1147, S1159, S1177, S1187, S1190, S1196, S1205, and S1208 each carry phosphoserine. Residues 1179–1189 (EDTQSLSFSEE) are compositionally biased toward polar residues. The span at 1197 to 1210 (LDISSKQLSPESLG) shows a compositional bias: polar residues. Positions 1223–1234 (EKGPLVKAEDNS) are enriched in basic and acidic residues. Phosphoserine occurs at positions 1251, 1289, 1310, 1313, and 1316. The segment covering 1302-1317 (TSDSSLTKSPESLSSP) has biased composition (low complexity). 6 stretches are compositionally biased toward basic and acidic residues: residues 1332–1350 (GSED…RKSE), 1370–1384 (SVMH…EENK), 1391–1435 (KTSE…KALE), 1449–1488 (PRAR…RAPE), 1499–1541 (RAPE…DQDN), and 1549–1599 (GTLK…EKTR). Phosphoserine is present on residues S1516, S1580, and S1606. A compositionally biased stretch (basic and acidic residues) spans 1609-1625 (EEGKAREQEEKYWKEQD). Phosphoserine is present on residues S1634 and S1648. Residues 1709–1718 (QEITPLQHTP) are compositionally biased toward polar residues. Residues S1720, S1747, S1762, S1768, and S1772 each carry the phosphoserine modification. T1777 carries the phosphothreonine modification. Residues S1783 and S1789 each carry the phosphoserine modification. Residues 1794 to 1808 (TKSTPPTRNEPTTPS) are compositionally biased toward polar residues. Residues 1823 to 1844 (LPPAPLSPAPAPPTPAPDPHAP) are compositionally biased toward pro residues. Residues 1878–1890 (KDYRKAEGEREGE) are compositionally biased toward basic and acidic residues. A Phosphoserine modification is found at S1902. Basic and acidic residues-rich tracts occupy residues 1907-1935 (EVTE…DERS) and 1972-1988 (STKE…EKEL). At T1928 the chain carries Phosphothreonine. Over residues 1990-2006 (SAVSPPNLHSDTPTFSY) the composition is skewed to polar residues. A Phosphoserine modification is found at S1993. The span at 2013–2039 (TIPPRQEPEPGPNVEPSFTPPAVPPRA) shows a compositional bias: pro residues. A Phosphothreonine modification is found at T2031. The span at 2042–2058 (SLSQDPSPPLNGSTTSC) shows a compositional bias: polar residues. 2 positions are modified to phosphoserine: S2048 and S2082. The span at 2060 to 2096 (PDRRTPSPKEAGRSHWDDGTNDSDLEKGAREQPEKET) shows a compositional bias: basic and acidic residues. A compositionally biased stretch (pro residues) spans 2149 to 2158 (PAPPQLPSPA). Phosphoserine is present on residues S2209, S2226, S2230, S2233, and S2234. Polar residues predominate over residues 2231-2242 (EGSSSEATTPVI). Low complexity predominate over residues 2279-2292 (PLSPAPLASRDLAP). A compositionally biased stretch (basic and acidic residues) spans 2355-2367 (AEKEEAEALHAWE). Phosphoserine is present on S2425. Over residues 2478–2490 (SASDSGSSQSDSD) the composition is skewed to low complexity. A compositionally biased stretch (pro residues) spans 2535–2551 (DPPPAPLPDPRPPPPRP). Positions 2566-2576 (GRVERLREKVQ) are enriched in basic and acidic residues. S2623 and S2637 each carry phosphoserine.

Belongs to the MAP1 family. In terms of assembly, 3 different light chains, LC1 (a cleavage product of MAP1B), LC2 (a cleavage product of MAP1A) and LC3 (produced by one of the MAP1LC3 genes), can associate with the MAP1A or MAP1B heavy chains. Interacts with guanylate kinase-like domain of DLG1, DLG2 and DLG4. Binds to CSNK1D. Interacts with TIAM2. Interacts with ELAVL4. Post-translationally, phosphorylated by CSNK1D. LC2 is generated from MAP1A by proteolytic processing. It is free to associate with both MAP1A and MAP1B. As to expression, both isoforms highly expressed in brain, and to a lesser extent in embryo. Isoform 1 is also expressed at a low level in other tissues including heart and muscle.

It is found in the cytoplasm. The protein resides in the cytoskeleton. Functionally, structural protein involved in the filamentous cross-bridging between microtubules and other skeletal elements. The sequence is that of Microtubule-associated protein 1A (Map1a) from Mus musculus (Mouse).